Consider the following 446-residue polypeptide: Trigger factor (446 aa).

The PPIase FKBP-type domain maps to 163-248 (GDRLVIDFEG…VKEIKKKNLL (86 aa)).

Belongs to the FKBP-type PPIase family. Tig subfamily.

It localises to the cytoplasm. The enzyme catalyses [protein]-peptidylproline (omega=180) = [protein]-peptidylproline (omega=0). Its function is as follows. Involved in protein export. Acts as a chaperone by maintaining the newly synthesized protein in an open conformation. Functions as a peptidyl-prolyl cis-trans isomerase. This Natranaerobius thermophilus (strain ATCC BAA-1301 / DSM 18059 / JW/NM-WN-LF) protein is Trigger factor.